The primary structure comprises 365 residues: Alternative oxidase 2, mitochondrial (365 aa).

Residues 32–46 (TPPHSTTTTSPSSPA) show a composition bias toward low complexity. The segment at 32–52 (TPPHSTTTTSPSSPAFHQPNH) is disordered. Residues Glu166, Glu205, and His208 each contribute to the Fe cation site. Residues 220–242 (WFTRSIIYVGQGVFTNVFFLLYL) traverse the membrane as a helical segment. Positions 256, 257, 312, and 315 each coordinate Fe cation. Residues 345 to 365 (QPNHGINVMRPTGWEKQDLQL) are disordered.

It belongs to the alternative oxidase family. The cofactor is Fe cation.

The protein resides in the mitochondrion inner membrane. In terms of biological role, catalyzes cyanide-resistant oxygen consumption. May increase respiration when the cytochrome respiratory pathway is restricted, or in response to low temperatures. This is Alternative oxidase 2, mitochondrial (AOX2) from Candida albicans (Yeast).